Reading from the N-terminus, the 148-residue chain is Hemoglobin subunit beta-1 (148 aa).

Positions 3 to 148 (EWTDAERTAI…VVSALCRQYH (146 aa)) constitute a Globin domain. Heme b-binding residues include H64 and H93.

Heterotetramer of two alpha chains and two beta chains. In terms of tissue distribution, red blood cells.

Its function is as follows. Involved in oxygen transport from gills to the various peripheral tissues. This is Hemoglobin subunit beta-1 (ba1) from Danio rerio (Zebrafish).